The following is a 55-amino-acid chain: Large ribosomal subunit protein bL33A (55 aa).

This sequence belongs to the bacterial ribosomal protein bL33 family.

This Salinispora tropica (strain ATCC BAA-916 / DSM 44818 / JCM 13857 / NBRC 105044 / CNB-440) protein is Large ribosomal subunit protein bL33A.